A 338-amino-acid chain; its full sequence is Mitoferrin-1 (338 aa).

The segment at 1-37 (MELRRGGVGSQAAGRRMDGDCRDGGCGSKDAGSEDYE) is disordered. Solcar repeat units lie at residues 43-131 (ASVS…MKRT), 141-225 (NSHL…LQEQ), and 232-326 (YNPQ…FKYF). Transmembrane regions (helical) follow at residues 45–64 (VSTH…SIMY), 106–125 (GLNV…FACY), 143–162 (HLAN…AVMN), 200–219 (SYTT…FITY), 234–253 (PQSH…AATT), and 301–320 (GIQA…WSVY).

Belongs to the mitochondrial carrier (TC 2.A.29) family. Interacts with ACB10; this interaction stabilizes SLC25A37 and enhances the function of SLC25A37 to import mitochondrial iron during erythroid differentiation.

It localises to the mitochondrion inner membrane. The catalysed reaction is Fe(2+)(in) = Fe(2+)(out). Its function is as follows. Mitochondrial iron transporter that specifically mediates iron uptake in developing erythroid cells, thereby playing an essential role in heme biosynthesis. The chain is Mitoferrin-1 (Slc25a37) from Rattus norvegicus (Rat).